The sequence spans 222 residues: uncharacterized protein (222 aa).

The segment at residues 1–27 (MSFTRRKFVLGMGTVIFFTGSASSLLA) is a signal peptide (tat-type signal). 3 consecutive 4Fe-4S ferredoxin-type domains span residues 37–67 (YAMI…AQGS), 83–114 (TQYH…RDEQ), and 115–144 (GIVR…LNPV). 16 residues coordinate [4Fe-4S] cluster: Cys46, Cys49, Cys52, Cys56, Cys92, Cys95, Cys100, Cys104, Cys124, Cys127, Cys130, Cys134, Cys151, Cys154, Cys167, and Cys171.

Post-translationally, exported by the Tat system. The position of the signal peptide cleavage has not been experimentally proven. Can also be exported by the Sec system.

This is an uncharacterized protein from Escherichia coli (strain K12).